Consider the following 372-residue polypeptide: Chaperone protein DnaJ (372 aa).

One can recognise a J domain in the interval 5-69 (DYYEVLGLSK…QKKAQYDQFG (65 aa)). The CR-type zinc-finger motif lies at 129–211 (GAEKEISVKK…CGGTGRKVKT (83 aa)). Zn(2+) is bound by residues Cys-142, Cys-145, Cys-159, Cys-162, Cys-185, Cys-188, Cys-199, and Cys-202. CXXCXGXG motif repeat units lie at residues 142–149 (CDTCDGSG), 159–166 (CSTCGGRG), 185–192 (CPDCGGTG), and 199–206 (CSDCGGTG).

The protein belongs to the DnaJ family. As to quaternary structure, homodimer. Zn(2+) is required as a cofactor.

Its subcellular location is the cytoplasm. In terms of biological role, participates actively in the response to hyperosmotic and heat shock by preventing the aggregation of stress-denatured proteins and by disaggregating proteins, also in an autonomous, DnaK-independent fashion. Unfolded proteins bind initially to DnaJ; upon interaction with the DnaJ-bound protein, DnaK hydrolyzes its bound ATP, resulting in the formation of a stable complex. GrpE releases ADP from DnaK; ATP binding to DnaK triggers the release of the substrate protein, thus completing the reaction cycle. Several rounds of ATP-dependent interactions between DnaJ, DnaK and GrpE are required for fully efficient folding. Also involved, together with DnaK and GrpE, in the DNA replication of plasmids through activation of initiation proteins. This is Chaperone protein DnaJ from Macrococcus caseolyticus (strain JCSC5402) (Macrococcoides caseolyticum).